We begin with the raw amino-acid sequence, 217 residues long: 2-phospho-L-lactate guanylyltransferase (217 aa).

This sequence belongs to the CofC family. As to quaternary structure, homodimer.

It carries out the reaction (2S)-2-phospholactate + GTP + H(+) = (2S)-lactyl-2-diphospho-5'-guanosine + diphosphate. It participates in cofactor biosynthesis; coenzyme F420 biosynthesis. Guanylyltransferase that catalyzes the activation of (2S)-2-phospholactate (2-PL) as (2S)-lactyl-2-diphospho-5'-guanosine, via the condensation of 2-PL with GTP. It is involved in the biosynthesis of coenzyme F420, a hydride carrier cofactor. The sequence is that of 2-phospho-L-lactate guanylyltransferase from Methanospirillum hungatei JF-1 (strain ATCC 27890 / DSM 864 / NBRC 100397 / JF-1).